The chain runs to 516 residues: Probable serine/threonine-protein kinase WNK3 (516 aa).

In terms of domain architecture, Protein kinase spans 22 to 280; it reads GRYKEVLGKG…AKELLDDPFL (259 aa). ATP-binding positions include 102 to 105 and Lys-152; that span reads TEVF. Asp-169 (proton acceptor) is an active-site residue. Residues 426 to 451 form a disordered region; it reads SSPKAGAGDSRSPFAPRSNSKLSSAQ. Polar residues predominate over residues 442-451; that stretch reads RSNSKLSSAQ. Positions 457–490 form a coiled coil; it reads EVGVIVEKLESLLRKQREEIEEMQRDQERIVTEF.

Belongs to the protein kinase superfamily. Ser/Thr protein kinase family. WNK subfamily.

It carries out the reaction L-seryl-[protein] + ATP = O-phospho-L-seryl-[protein] + ADP + H(+). It catalyses the reaction L-threonyl-[protein] + ATP = O-phospho-L-threonyl-[protein] + ADP + H(+). May regulate flowering time by modulating the photoperiod pathway. The polypeptide is Probable serine/threonine-protein kinase WNK3 (WNK3) (Arabidopsis thaliana (Mouse-ear cress)).